The sequence spans 227 residues: Urease accessory protein UreE (227 aa).

A disordered region spans residues Pro192 to Gln227. A compositionally biased stretch (basic and acidic residues) spans His209 to His221.

This sequence belongs to the UreE family.

It localises to the cytoplasm. In terms of biological role, involved in urease metallocenter assembly. Binds nickel. Probably functions as a nickel donor during metallocenter assembly. The chain is Urease accessory protein UreE from Yersinia bercovieri.